A 402-amino-acid polypeptide reads, in one-letter code: Serine--glyoxylate aminotransferase (402 aa).

An N6-(pyridoxal phosphate)lysine modification is found at K201.

The protein belongs to the class-V pyridoxal-phosphate-dependent aminotransferase family. The cofactor is pyridoxal 5'-phosphate.

It catalyses the reaction glyoxylate + L-serine = 3-hydroxypyruvate + glycine. It functions in the pathway one-carbon metabolism; formaldehyde assimilation via serine pathway. In Methylorubrum extorquens (strain ATCC 14718 / DSM 1338 / JCM 2805 / NCIMB 9133 / AM1) (Methylobacterium extorquens), this protein is Serine--glyoxylate aminotransferase.